The chain runs to 201 residues: UPF0637 protein LSEI_1198 (201 aa).

The protein belongs to the UPF0637 family.

The chain is UPF0637 protein LSEI_1198 from Lacticaseibacillus paracasei (strain ATCC 334 / BCRC 17002 / CCUG 31169 / CIP 107868 / KCTC 3260 / NRRL B-441) (Lactobacillus paracasei).